The following is an 810-amino-acid chain: Leucine--tRNA ligase (810 aa).

The short motif at 41 to 52 (PYPSGQGLHVGH) is the 'HIGH' region element. Positions 582–586 (KMSKS) match the 'KMSKS' region motif. Lys-585 is a binding site for ATP.

Belongs to the class-I aminoacyl-tRNA synthetase family.

Its subcellular location is the cytoplasm. It carries out the reaction tRNA(Leu) + L-leucine + ATP = L-leucyl-tRNA(Leu) + AMP + diphosphate. The protein is Leucine--tRNA ligase of Oenococcus oeni (strain ATCC BAA-331 / PSU-1).